The chain runs to 5061 residues: E3 ubiquitin-protein ligase rnf213-beta (5061 aa).

The span at 1–12 (MTRKRKSGKKGK) shows a compositional bias: basic residues. Positions 1 to 334 (MTRKRKSGKK…QRKPSPVRAP (334 aa)) are disordered. Polar residues-rich tracts occupy residues 24–52 (GGST…TQKD) and 75–87 (SDGS…TNKE). Basic residues predominate over residues 100 to 110 (LQKKGPQKRKG). 2 stretches are compositionally biased toward polar residues: residues 127-163 (QTSY…TSAS) and 172-200 (TETV…QPPQ). 2 stretches are compositionally biased toward basic and acidic residues: residues 217-229 (KGSE…EESV) and 236-289 (LSEI…EEPK). A compositionally biased stretch (low complexity) spans 292-301 (AAAAATGKTG). A compositionally biased stretch (polar residues) spans 306-322 (EQTNQIEANQDSTMESK). ATP is bound by residues 1923–1928 (AVGKSL), glutamate 2023, aspartate 2074, lysine 2417, and serine 2492. Residues cysteine 3957, cysteine 3960, cysteine 3972, histidine 3974, cysteine 3977, cysteine 3980, cysteine 3993, cysteine 3996, cysteine 4451, and histidine 4455 each contribute to the Zn(2+) site. Residues 3957 to 3997 (CRVCLMELSEPFALPCEHVFCRSCLRRSMEREEAQHCPVCR) form an RING-type zinc finger. The RZ-type zinc-finger motif lies at 4429–4501 (MPDDHTSEAK…AYGDYDRTRP (73 aa)). Cysteine 4462 serves as the catalytic Nucleophile; for E3 ubiquitin-lipopolysaccharide ligase activity. Zn(2+) is bound by residues cysteine 4471 and cysteine 4474.

This sequence belongs to the AAA ATPase family.

The protein localises to the cytoplasm. Its subcellular location is the cytosol. It is found in the lipid droplet. The catalysed reaction is S-ubiquitinyl-[E2 ubiquitin-conjugating enzyme]-L-cysteine + [acceptor protein]-L-lysine = [E2 ubiquitin-conjugating enzyme]-L-cysteine + N(6)-ubiquitinyl-[acceptor protein]-L-lysine.. The enzyme catalyses ATP + H2O = ADP + phosphate + H(+). It participates in protein modification; protein ubiquitination. In terms of biological role, atypical E3 ubiquitin ligase that can catalyze ubiquitination of both proteins and lipids, and which is involved in various processes, such as lipid metabolism, angiogenesis and cell-autonomous immunity. Acts as a key immune sensor by catalyzing ubiquitination of the lipid A moiety of bacterial lipopolysaccharide (LPS) via its RZ-type zinc-finger: restricts the proliferation of cytosolic bacteria, such as Salmonella, by generating the bacterial ubiquitin coat through the ubiquitination of LPS. Ubiquitination of LPS triggers cell-autonomous immunity, such as antibacterial autophagy, leading to degradation of the microbial invader. Involved in lipid metabolism by regulating fat storage and lipid droplet formation; act by inhibiting the lipolytic process. Also regulates lipotoxicity by inhibiting desaturation of fatty acids. Also acts as an E3 ubiquitin-protein ligase via its RING-type zinc finger. Involved in the non-canonical Wnt signaling pathway in vascular development: acts by mediating ubiquitination and degradation of proteins downstream of rspo3, leading to inhibit the non-canonical Wnt signaling pathway and promoting vessel regression. Also has ATPase activity; ATPase activity is required for ubiquitination of LPS. This chain is E3 ubiquitin-protein ligase rnf213-beta (rnf213b), found in Danio rerio (Zebrafish).